Reading from the N-terminus, the 310-residue chain is Small ribosomal subunit biogenesis GTPase RsgA 2 (310 aa).

A CP-type G domain is found at 77-238 (LSKQSHILAA…IIDTPGIKGF (162 aa)). GTP is bound by residues 126-129 (NKVD) and 180-188 (GHSGVGKST). Residues cysteine 262, cysteine 267, histidine 269, and cysteine 275 each contribute to the Zn(2+) site.

Belongs to the TRAFAC class YlqF/YawG GTPase family. RsgA subfamily. As to quaternary structure, monomer. Associates with 30S ribosomal subunit, binds 16S rRNA. Zn(2+) serves as cofactor.

The protein resides in the cytoplasm. In terms of biological role, one of several proteins that assist in the late maturation steps of the functional core of the 30S ribosomal subunit. Helps release RbfA from mature subunits. May play a role in the assembly of ribosomal proteins into the subunit. Circularly permuted GTPase that catalyzes slow GTP hydrolysis, GTPase activity is stimulated by the 30S ribosomal subunit. The protein is Small ribosomal subunit biogenesis GTPase RsgA 2 of Bacteroides thetaiotaomicron (strain ATCC 29148 / DSM 2079 / JCM 5827 / CCUG 10774 / NCTC 10582 / VPI-5482 / E50).